The chain runs to 211 residues: Protein-L-isoaspartate O-methyltransferase (211 aa).

Residue serine 62 is part of the active site.

This sequence belongs to the methyltransferase superfamily. L-isoaspartyl/D-aspartyl protein methyltransferase family.

It localises to the cytoplasm. The catalysed reaction is [protein]-L-isoaspartate + S-adenosyl-L-methionine = [protein]-L-isoaspartate alpha-methyl ester + S-adenosyl-L-homocysteine. Its function is as follows. Catalyzes the methyl esterification of L-isoaspartyl residues in peptides and proteins that result from spontaneous decomposition of normal L-aspartyl and L-asparaginyl residues. It plays a role in the repair and/or degradation of damaged proteins. This Shewanella sp. (strain ANA-3) protein is Protein-L-isoaspartate O-methyltransferase.